The primary structure comprises 274 residues: Large ribosomal subunit protein uL2 (274 aa).

The interval 223–274 (VAMNPVDHPHGGGEGRTSGGRHPVTPWGVPTKGYKTRSNKRTDKYIVRRRNK) is disordered.

This sequence belongs to the universal ribosomal protein uL2 family. Part of the 50S ribosomal subunit. Forms a bridge to the 30S subunit in the 70S ribosome.

Functionally, one of the primary rRNA binding proteins. Required for association of the 30S and 50S subunits to form the 70S ribosome, for tRNA binding and peptide bond formation. It has been suggested to have peptidyltransferase activity; this is somewhat controversial. Makes several contacts with the 16S rRNA in the 70S ribosome. The chain is Large ribosomal subunit protein uL2 from Shewanella putrefaciens (strain CN-32 / ATCC BAA-453).